A 207-amino-acid polypeptide reads, in one-letter code: Large ribosomal subunit protein uL4 (207 aa).

The segment at 44–78 (QRQGTHDVKNRSEVRGGGRKPWRQKGTGRARQGSI) is disordered. The span at 47 to 59 (GTHDVKNRSEVRG) shows a compositional bias: basic and acidic residues. Residues 60-71 (GGRKPWRQKGTG) are compositionally biased toward basic residues.

Belongs to the universal ribosomal protein uL4 family. Part of the 50S ribosomal subunit.

Functionally, one of the primary rRNA binding proteins, this protein initially binds near the 5'-end of the 23S rRNA. It is important during the early stages of 50S assembly. It makes multiple contacts with different domains of the 23S rRNA in the assembled 50S subunit and ribosome. Its function is as follows. Forms part of the polypeptide exit tunnel. This chain is Large ribosomal subunit protein uL4, found in Brevibacillus brevis (strain 47 / JCM 6285 / NBRC 100599).